The sequence spans 486 residues: ATP-dependent rRNA helicase rrp3 (486 aa).

The disordered stretch occupies residues Met-1–Lys-60. Positions Lys-60–Arg-88 match the Q motif motif. Residues Ile-91–Val-262 form the Helicase ATP-binding domain. Position 104 to 111 (Ala-104 to Thr-111) interacts with ATP. Residues Asp-210–Asp-213 carry the DEAD box motif. The Helicase C-terminal domain occupies His-286–Met-434. 2 stretches are compositionally biased toward basic and acidic residues: residues Ala-447 to Lys-460 and Arg-476 to Gly-486. Residues Ala-447–Gly-486 form a disordered region.

This sequence belongs to the DEAD box helicase family. DDX47/RRP3 subfamily. As to quaternary structure, interacts with the SSU processome.

It is found in the nucleus. The enzyme catalyses ATP + H2O = ADP + phosphate + H(+). ATP-dependent rRNA helicase required for pre-ribosomal RNA processing. Involved in the maturation of the 35S-pre-rRNA and to its cleavage to mature 18S rRNA. The sequence is that of ATP-dependent rRNA helicase rrp3 from Botryotinia fuckeliana (strain B05.10) (Noble rot fungus).